The chain runs to 299 residues: Protease HtpX homolog (299 aa).

A run of 2 helical transmembrane segments spans residues 15 to 35 (ILLL…GYLF) and 39 to 59 (GLGG…SMIF). His143 lines the Zn(2+) pocket. The active site involves Glu144. His147 contacts Zn(2+). 2 helical membrane passes run 158–178 (IAVA…RMMW) and 198–218 (IIML…ATLV). Glu227 contacts Zn(2+).

The protein belongs to the peptidase M48B family. Zn(2+) serves as cofactor.

Its subcellular location is the cell membrane. The sequence is that of Protease HtpX homolog from Streptococcus pneumoniae serotype 19F (strain G54).